The primary structure comprises 429 residues: UDP-N-acetylglucosamine 1-carboxyvinyltransferase (429 aa).

Lys22–Asn23 lines the phosphoenolpyruvate pocket. Arg102 is a binding site for UDP-N-acetyl-alpha-D-glucosamine. Cys126 (proton donor) is an active-site residue. Residue Cys126 is modified to 2-(S-cysteinyl)pyruvic acid O-phosphothioketal. UDP-N-acetyl-alpha-D-glucosamine is bound by residues Arg131–Leu135, Asp316, and Ile338.

It belongs to the EPSP synthase family. MurA subfamily.

It localises to the cytoplasm. The enzyme catalyses phosphoenolpyruvate + UDP-N-acetyl-alpha-D-glucosamine = UDP-N-acetyl-3-O-(1-carboxyvinyl)-alpha-D-glucosamine + phosphate. The protein operates within cell wall biogenesis; peptidoglycan biosynthesis. In terms of biological role, cell wall formation. Adds enolpyruvyl to UDP-N-acetylglucosamine. This Methylorubrum extorquens (strain CM4 / NCIMB 13688) (Methylobacterium extorquens) protein is UDP-N-acetylglucosamine 1-carboxyvinyltransferase.